A 554-amino-acid chain; its full sequence is Undecaprenyl phosphate-alpha-4-amino-4-deoxy-L-arabinose arabinosyl transferase (554 aa).

The next 11 membrane-spanning stretches (helical) occupy residues 4–24 (LKGS…LLPI), 87–107 (FGSI…ATLL), 115–135 (FLAA…SYAV), 178–198 (FMTK…PIVI), 206–226 (LIIF…PWAL), 262–282 (YLPI…AALL), 293–313 (ELFF…VAKG), 315–335 (LPTY…AYAT), 352–372 (INLI…MGWV), 384–404 (QKVI…FATM), and 410–430 (HWHW…YLIP).

This sequence belongs to the glycosyltransferase 83 family.

The protein resides in the cell inner membrane. It catalyses the reaction 4-amino-4-deoxy-alpha-L-arabinopyranosyl di-trans,octa-cis-undecaprenyl phosphate + lipid IVA = lipid IIA + di-trans,octa-cis-undecaprenyl phosphate.. Its pathway is lipopolysaccharide metabolism; 4-amino-4-deoxy-beta-L-arabinose-lipid A biosynthesis. In terms of biological role, catalyzes the transfer of the L-Ara4N moiety of the glycolipid undecaprenyl phosphate-alpha-L-Ara4N to lipid A. The modified arabinose is attached to lipid A and is required for resistance to polymyxin and cationic antimicrobial peptides. The chain is Undecaprenyl phosphate-alpha-4-amino-4-deoxy-L-arabinose arabinosyl transferase from Yersinia enterocolitica serotype O:8 / biotype 1B (strain NCTC 13174 / 8081).